The chain runs to 445 residues: Phosphoglucosamine mutase (445 aa).

Serine 102 acts as the Phosphoserine intermediate in catalysis. Mg(2+) is bound by residues serine 102, aspartate 241, aspartate 243, and aspartate 245. Serine 102 is subject to Phosphoserine.

Belongs to the phosphohexose mutase family. Requires Mg(2+) as cofactor. In terms of processing, activated by phosphorylation.

The enzyme catalyses alpha-D-glucosamine 1-phosphate = D-glucosamine 6-phosphate. In terms of biological role, catalyzes the conversion of glucosamine-6-phosphate to glucosamine-1-phosphate. In Hahella chejuensis (strain KCTC 2396), this protein is Phosphoglucosamine mutase.